We begin with the raw amino-acid sequence, 472 residues long: MTGTPDVFPPATPGGTPLVALPAGPRKPDQVKGKLYIKTHGCQMNEYDSAKMADVLAASDGLELTDSPDDADVILVNTCSIREKAQEKVFSQLGVWKSLKNKGREVIIGVGGCVASQEGEAIIKRAPFVDLVFGPQTLHRLPELIRARREQKRPQVDISFPEIEKFDRLPEPRADGASAFVSIMEGCSKYCSFCVVPYTRGTEVSRPFEDVVVEVAQLAAQGVREINLLGQNVNAYRGPYGDGEFADLGLLIRTIAEIDGVGRIRFTTSHPLEFSDSLIDAFRDVPQLANFLHLPVQAGSDRVLSAMKRGYTALEFKSKIRKLRAVRPDISISSDFIVGFPGETDADFEKTMKLIEDIGFDHSFSFIYSRRPGTPAADLEDTISDAEKHARLSRLQERINAHAAGISEKMVGTVQTVLVEGPSRKNPNELTGKTENMRSVNFPAPARLIGQFVDVVITEALTNSLRARVVAE.

The disordered stretch occupies residues M1–G24. Residues G33–E150 form the MTTase N-terminal domain. [4Fe-4S] cluster contacts are provided by C42, C79, C113, C187, C191, and C194. Residues R173–S407 enclose the Radical SAM core domain. Residues E408–A471 form the TRAM domain.

It belongs to the methylthiotransferase family. MiaB subfamily. As to quaternary structure, monomer. The cofactor is [4Fe-4S] cluster.

Its subcellular location is the cytoplasm. The enzyme catalyses N(6)-dimethylallyladenosine(37) in tRNA + (sulfur carrier)-SH + AH2 + 2 S-adenosyl-L-methionine = 2-methylsulfanyl-N(6)-dimethylallyladenosine(37) in tRNA + (sulfur carrier)-H + 5'-deoxyadenosine + L-methionine + A + S-adenosyl-L-homocysteine + 2 H(+). Functionally, catalyzes the methylthiolation of N6-(dimethylallyl)adenosine (i(6)A), leading to the formation of 2-methylthio-N6-(dimethylallyl)adenosine (ms(2)i(6)A) at position 37 in tRNAs that read codons beginning with uridine. This Stenotrophomonas maltophilia (strain R551-3) protein is tRNA-2-methylthio-N(6)-dimethylallyladenosine synthase.